The chain runs to 341 residues: D-erythrose-4-phosphate dehydrogenase (341 aa).

12–13 serves as a coordination point for NAD(+); sequence RI. Substrate contacts are provided by residues 154–156, arginine 200, 213–214, and arginine 236; these read SCT and TK. Catalysis depends on cysteine 155, which acts as the Nucleophile. Asparagine 318 serves as a coordination point for NAD(+).

The protein belongs to the glyceraldehyde-3-phosphate dehydrogenase family. Epd subfamily. Homotetramer.

The protein resides in the cytoplasm. It carries out the reaction D-erythrose 4-phosphate + NAD(+) + H2O = 4-phospho-D-erythronate + NADH + 2 H(+). Its pathway is cofactor biosynthesis; pyridoxine 5'-phosphate biosynthesis; pyridoxine 5'-phosphate from D-erythrose 4-phosphate: step 1/5. Functionally, catalyzes the NAD-dependent conversion of D-erythrose 4-phosphate to 4-phosphoerythronate. This chain is D-erythrose-4-phosphate dehydrogenase, found in Edwardsiella ictaluri (strain 93-146).